The following is a 195-amino-acid chain: MAFVLSLLMALVLVSYGPGGSLGCYLSQRLMLDARENLRLLDRMNRLSPHSCLQDRKDFGLPQEMVEGDQLQEDQAFPVLYEMLQQSFNLFYTEHSSAAWDTTLLDQLCTGLQQQLEDLDTCRGQVMGEEDSELGNMDPIVTVKKYFQGIYDYLQEKGYSDCAWEIVRVEMMRALTSSTTLQKRLTKTGGDLNSP.

The signal sequence occupies residues M1–G23. 2 disulfide bridges follow: C24–C122 and C52–C162.

It belongs to the alpha/beta interferon family. IFN-alphaII subfamily. In terms of tissue distribution, constitutively and exclusively expressed in the mononuclear cells of the extraembryonic trophectoderm.

It localises to the secreted. Paracrine hormone primarily responsible for maternal recognition of pregnancy. Interacts with endometrial receptors, probably type I interferon receptors, and blocks estrogen receptor expression, preventing the estrogen-induced increase in oxytocin receptor expression in the endometrium. This results in the suppression of the pulsatile endometrial release of the luteolytic hormone prostaglandin F2-alpha, hindering the regression of the corpus luteum (luteolysis) and therefore a return to ovarian cyclicity. This, and a possible direct effect of IFN-tau on prostaglandin synthesis, leads in turn to continued ovarian progesterone secretion, which stimulates the secretion by the endometrium of the nutrients required for the growth of the conceptus. In summary, displays particularly high antiviral and antiproliferative potency concurrently with particular weak cytotoxicity, high antiluteolytic activity and immunomodulatory properties. In contrast with other IFNs, IFN-tau is not virally inducible. This Ovis aries (Sheep) protein is Interferon tau-8 (IFNT8).